The primary structure comprises 186 residues: TATA-box-binding protein F (186 aa).

Repeat copies occupy residues 10–86 (IENV…FDDL) and 101–179 (VQNI…NDRL).

Belongs to the TBP family.

Its function is as follows. General factor that plays a role in the activation of archaeal genes transcribed by RNA polymerase. Binds specifically to the TATA box promoter element which lies close to the position of transcription initiation. This chain is TATA-box-binding protein F (tbpF), found in Halobacterium salinarum (strain ATCC 700922 / JCM 11081 / NRC-1) (Halobacterium halobium).